The primary structure comprises 235 residues: Sugar fermentation stimulation protein homolog (235 aa).

It belongs to the SfsA family.

The chain is Sugar fermentation stimulation protein homolog from Serratia proteamaculans (strain 568).